The sequence spans 77 residues: Omega-conotoxin TxVII (77 aa).

The first 22 residues, methionine 1–alanine 22, serve as a signal peptide directing secretion. Residues aspartate 23–asparagine 49 constitute a propeptide that is removed on maturation. 3 disulfides stabilise this stretch: cysteine 52–cysteine 67, cysteine 59–cysteine 71, and cysteine 66–cysteine 75.

Expressed by the venom duct.

It is found in the secreted. Functionally, omega-conotoxins act at presynaptic membranes, they bind and block voltage-gated calcium channels (Cav). Specifically acts on L-type channels. It blocks molluscan dihydropyridine-sensitive calcium channels. This Conus textile (Cloth-of-gold cone) protein is Omega-conotoxin TxVII.